Reading from the N-terminus, the 278-residue chain is MGRKVHPIGFRLGIIKDWSAKWHASDKNFAECLTEDLKLRKAISKKYVDAAISQVDIERQSNKVTVSVRTARPGIVIGRGGQRVDEMRHFLEDLIGKKVQLNIVEISQAELDAFLVARSVAEQIERRVAYRRAMKQAIFRSMQAGAKGIKICASGRLGGVEIARREVMHEGRVPLHTLRADIDYGCTRAHTALGDVGIKVWVYRGDILPEAKEKSESEVTEMAAVMADAPAAVVTETKVADIAAKPKRVVKKAEAEIPAEEKPKRVVKKAENITKEEE.

In terms of domain architecture, KH type-2 spans 39–107 (LRKAISKKYV…KVQLNIVEIS (69 aa)). The tract at residues 255–278 (AEIPAEEKPKRVVKKAENITKEEE) is disordered.

The protein belongs to the universal ribosomal protein uS3 family. As to quaternary structure, part of the 30S ribosomal subunit. Forms a tight complex with proteins S10 and S14.

In terms of biological role, binds the lower part of the 30S subunit head. Binds mRNA in the 70S ribosome, positioning it for translation. The chain is Small ribosomal subunit protein uS3 from Dehalococcoides mccartyi (strain CBDB1).